A 426-amino-acid chain; its full sequence is DNA polymerase processivity factor component OPG148 (426 aa).

This sequence belongs to the orthopoxvirus OPG148 family. Interacts with the DNA polymerase catalytic subunit OPG071. Interacts with UDG/OPG116. Component of the uracil-DNA glycosylase(UDG)-OPG148-polymerase complex; OPG148 and UDG form a heterodimeric processivity factor that associates with OPG071 to form the processive polymerase holoenzyme. Interacts with OPG117.

Its function is as follows. Plays an essential role in viral DNA replication by acting as the polymerase processivity factor together with protein OPG116. Serves as a bridge which links the DNA polymerase OPG071 and the uracil DNA glycosylase. This is DNA polymerase processivity factor component OPG148 (OPG148) from Vaccinia virus (strain Copenhagen) (VACV).